A 74-amino-acid polypeptide reads, in one-letter code: Amphipathic peptide CT1 (74 aa).

Positions 1 to 23 are cleaved as a signal peptide; it reads MKTQIVILFISMIMLQMFVQIEG. Residue Val37 is modified to Valine amide. A propeptide spanning residues 41-74 is cleaved from the precursor; that stretch reads GLRNLDDLDDLDLDHLFDSDVSDADLRLLKQMFR.

It belongs to the non-disulfide-bridged peptide (NDBP) superfamily. Short antimicrobial peptide (group 4) family. Expressed by the venom gland.

It is found in the secreted. The protein localises to the target cell membrane. Functionally, antimicrobial peptide that is rapidly bactericidal against Gram-positive bacteria (MIC=12.5 ug/ml against S.aureus, and MIC=100 ug/ml against M.luteus). Is also active against clinical antibiotics-resistant bacterial strains. The sequence is that of Amphipathic peptide CT1 from Scorpiops tibetanus (Scorpion).